A 218-amino-acid chain; its full sequence is Glutathione S-transferase Mu 2 (218 aa).

The 87-residue stretch at 2–88 (PMTLGYWDIR…YLGRKHNLCG (87 aa)) folds into the GST N-terminal domain. A glutathione-binding site is contributed by 7–8 (YW). Phosphoserine is present on residues Ser27 and Ser44. Glutathione contacts are provided by residues 43 to 46 (RSQW), Lys50, 59 to 60 (NL), and 72 to 73 (QS). One can recognise a GST C-terminal domain in the interval 90 to 214 (TEEERIRVDV…SKPIFAKMAF (125 aa)). Tyr116 contributes to the substrate binding site. Phosphoserine is present on Ser117.

It belongs to the GST superfamily. Mu family. Homodimer or heterodimer.

The protein localises to the cytoplasm. It carries out the reaction RX + glutathione = an S-substituted glutathione + a halide anion + H(+). It catalyses the reaction 11(S)-hydroxy-14(S),15(S)-epoxy-(5Z,8Z,12E)-eicosatrienoate + glutathione = (11S,15S)-dihydroxy-14(R)-S-glutathionyl-(5Z,8Z,12E)-eicosatrienoate. Its function is as follows. Conjugation of reduced glutathione to a wide number of exogenous and endogenous hydrophobic electrophiles. Participates in the formation of novel hepoxilin regioisomers. The sequence is that of Glutathione S-transferase Mu 2 from Rattus norvegicus (Rat).